The following is a 444-amino-acid chain: MTSLLFVILNIILTLHLCAGQTPAADNNKRLICYYDAQSYLRPGFAEMKLSFLKTAAEFCTHLIYGYADLNDDLYEISSLNVDLDMFHYKEITSLKAEFPHLRIYLSIGGDHDNGHYDAGKYMRFLESGKDRQNTFIESAIHLLKMNDFDGLDLAFKLPTNKPRKVHSEFGLLWKKFKKLFTGDFIVDPDAALHKQQYTEFVGNLARTFRNANLSLTMTVLPNVNSTWYFDVSEIYNNFEYINLFSFDFLTPLRNPEEADYTAPIYLRDEENRLAHYNIDYQMNYWVNHGCPAHKLNLGIATYGRAWKLSAKSGISCKPVVRETLGPAEPGLQSNISGLLSWPEICSKLAITNGAGYKGADAPVRKVQDLERLYGNYAFRPADDNDEHGIWISFDDPDFAGIKTNFVKTKFIGGVALYDLSYDDFRGLCTGVKFPILRSVRGHL.

The first 20 residues, 1 to 20, serve as a signal peptide directing secretion; it reads MTSLLFVILNIILTLHLCAG. Residues 29–444 form the GH18 domain; the sequence is KRLICYYDAQ…PILRSVRGHL (416 aa). An intrachain disulfide couples cysteine 33 to cysteine 60. N-linked (GlcNAc...) asparagine glycosylation is found at asparagine 213, asparagine 225, and asparagine 335. Cysteines 346 and 429 form a disulfide.

This sequence belongs to the glycosyl hydrolase 18 family. IDGF subfamily. Glycosylated.

It localises to the secreted. Functionally, cooperates with insulin-like peptides to stimulate the proliferation, polarization and motility of imaginal disk cells. May act by stabilizing the binding of insulin-like peptides to its receptor through a simultaneous interaction with both molecules to form a multiprotein signaling complex. The protein is Chitinase-like protein Idgf1 (Idgf1) of Glossina morsitans morsitans (Savannah tsetse fly).